The primary structure comprises 343 residues: Anthranilate phosphoribosyltransferase (343 aa).

Residues glycine 84, 87–88, threonine 92, 94–97, 112–120, and serine 124 contribute to the 5-phospho-alpha-D-ribose 1-diphosphate site; these read GD, NIST, and KHGNRSASS. Glycine 84 is a binding site for anthranilate. Residue serine 96 coordinates Mg(2+). Asparagine 115 serves as a coordination point for anthranilate. Arginine 170 serves as a coordination point for anthranilate. Mg(2+) contacts are provided by aspartate 229 and glutamate 230.

The protein belongs to the anthranilate phosphoribosyltransferase family. In terms of assembly, homodimer. Requires Mg(2+) as cofactor.

It carries out the reaction N-(5-phospho-beta-D-ribosyl)anthranilate + diphosphate = 5-phospho-alpha-D-ribose 1-diphosphate + anthranilate. It participates in amino-acid biosynthesis; L-tryptophan biosynthesis; L-tryptophan from chorismate: step 2/5. Catalyzes the transfer of the phosphoribosyl group of 5-phosphorylribose-1-pyrophosphate (PRPP) to anthranilate to yield N-(5'-phosphoribosyl)-anthranilate (PRA). This is Anthranilate phosphoribosyltransferase from Bordetella avium (strain 197N).